We begin with the raw amino-acid sequence, 37 residues long: Large ribosomal subunit protein bL36c (37 aa).

This sequence belongs to the bacterial ribosomal protein bL36 family.

It localises to the plastid. The protein resides in the chloroplast. The protein is Large ribosomal subunit protein bL36c of Thalassiosira pseudonana (Marine diatom).